A 171-amino-acid chain; its full sequence is Ribosome maturation factor RimM (171 aa).

The region spanning 97 to 170 (EGEYYYHEII…LVTIHVMEGL (74 aa)) is the PRC barrel domain.

It belongs to the RimM family. In terms of assembly, binds ribosomal protein uS19.

The protein localises to the cytoplasm. In terms of biological role, an accessory protein needed during the final step in the assembly of 30S ribosomal subunit, possibly for assembly of the head region. Essential for efficient processing of 16S rRNA. May be needed both before and after RbfA during the maturation of 16S rRNA. It has affinity for free ribosomal 30S subunits but not for 70S ribosomes. The polypeptide is Ribosome maturation factor RimM (Bacillus cereus (strain ATCC 14579 / DSM 31 / CCUG 7414 / JCM 2152 / NBRC 15305 / NCIMB 9373 / NCTC 2599 / NRRL B-3711)).